The following is a 1165-amino-acid chain: Linoleate diol synthase (1165 aa).

A fatty acid alpha-dioxygenase region spans residues 104–448 (TDGLINDLWD…DGAFDDTELV (345 aa)). Heme b is bound at residue histidine 203. Ca(2+) is bound by residues aspartate 204, serine 219, tyrosine 221, aspartate 223, and serine 225. Residue tyrosine 376 is part of the active site. Residue histidine 379 participates in heme b binding. The segment at 666-1161 (EVLSNQKDYK…ATTMKINWEG (496 aa)) is epoxy alcohol synthase. Cysteine 1080 is a binding site for heme. A disordered region spans residues 1114–1134 (RSYPASQWPGQAGRPPRDPAW).

It belongs to the peroxidase family. Homotetramer. The cofactor is heme b. Requires Ca(2+) as cofactor. It depends on heme as a cofactor. Post-translationally, the N-terminus is blocked.

It carries out the reaction (9Z,12Z)-octadecadienoate + O2 = (8R,9Z,12Z)-8-hydroperoxyoctadeca-9,12-dienoate. The enzyme catalyses (8R,9Z,12Z)-8-hydroperoxyoctadeca-9,12-dienoate = (7S,8S,9Z,12Z)-7,8-dihydroxyoctadeca-9,12-dienoate. In terms of biological role, 7,8-linoleate diol synthase is a bifunctional enzyme that converts linoleic acid (18:2n-6) into 8-hydroperoxy-8(E),12(Z)-octadecadienoic acid (8-HPODE) and then catalyzes the isomerization of the resulting hydroperoxide to 7,8-dihydroxy-9(Z),12(Z)-octadecadienoic acid (7,8-DiHODE). The polypeptide is Linoleate diol synthase (Gaeumannomyces graminis (Turf grass take-all root rot fungus)).